Reading from the N-terminus, the 859-residue chain is Cation/H(+) antiporter 24 (859 aa).

12 helical membrane passes run 64–84, 92–112, 122–142, 161–181, 194–214, 227–247, 258–278, 291–311, 312–332, 348–368, 384–404, and 438–458; these read AFST…VVSI, PRIV…FGGI, PIAN…FLFL, YIAA…GMAM, SIGG…YTVL, FAMS…VIFE, YSVF…LLVV, EGTL…LASC, FLTD…GLLV, TFIY…GTNI, FYMT…AALF, and IVGF…TAVT. Residues 538–566 form a disordered region; sequence IDHEQRKEEEEEEYEEEEEEPERKQSGRI. Residues 546-557 are compositionally biased toward acidic residues; sequence EEEEEYEEEEEE. A Phosphoserine modification is found at serine 857.

This sequence belongs to the monovalent cation:proton antiporter 2 (CPA2) transporter (TC 2.A.37) family. CHX (TC 2.A.37.4) subfamily. As to expression, specifically expressed in pollen.

Its subcellular location is the membrane. Functionally, may operate as a cation/H(+) antiporter. In Arabidopsis thaliana (Mouse-ear cress), this protein is Cation/H(+) antiporter 24 (CHX24).